Reading from the N-terminus, the 270-residue chain is Vegetative storage protein 1 (270 aa).

An N-terminal signal peptide occupies residues Met1 to Ser17. Residues Asn115 and Asn215 are each glycosylated (N-linked (GlcNAc...) asparagine).

It belongs to the APS1/VSP family. Expressed in leaves and in gynoecia, especially in styles, the basal and distal ends of ovaries and in siliques.

May function as somatic storage protein during early seedling development. The chain is Vegetative storage protein 1 (VSP1) from Arabidopsis thaliana (Mouse-ear cress).